Consider the following 492-residue polypeptide: Transcript termination protein OPG145 (492 aa).

Positions 100–256 (MIELKRPLYI…NSIINIAKLS (157 aa)) constitute a Helicase ATP-binding domain. Residue 113–120 (LACGFGKT) participates in ATP binding. The DEAH box motif lies at 206–209 (DESH).

This sequence belongs to the helicase family. Poxviruses subfamily. Interacts with OPG087. Might be part of a transcription complex composed at least of OPG087, OPG110, and OPG145.

It is found in the virion. Functionally, DNA helicase which seems to act as a postreplicative transcription termination factor. Involved in ATP-dependent release of nascent RNA. Forms a stable complex with single-stranded DNA, and to a lesser extent RNA. This is Transcript termination protein OPG145 (OPG145) from Cynomys gunnisoni (Gunnison's prairie dog).